Here is a 52-residue protein sequence, read N- to C-terminus: UPF0391 membrane protein ACIAD3602 (52 aa).

The next 2 helical transmembrane spans lie at 6–26 and 30–50; these read IIFA…VAGL and FAVI…ISRG.

This sequence belongs to the UPF0391 family.

The protein localises to the cell membrane. The chain is UPF0391 membrane protein ACIAD3602 from Acinetobacter baylyi (strain ATCC 33305 / BD413 / ADP1).